The primary structure comprises 511 residues: Bifunctional purine biosynthesis protein PurH (511 aa).

In terms of domain architecture, MGS-like spans 1–145; sequence MKKRALVSVS…KNHKFVSVIV (145 aa).

It belongs to the PurH family.

It carries out the reaction (6R)-10-formyltetrahydrofolate + 5-amino-1-(5-phospho-beta-D-ribosyl)imidazole-4-carboxamide = 5-formamido-1-(5-phospho-D-ribosyl)imidazole-4-carboxamide + (6S)-5,6,7,8-tetrahydrofolate. The enzyme catalyses IMP + H2O = 5-formamido-1-(5-phospho-D-ribosyl)imidazole-4-carboxamide. The protein operates within purine metabolism; IMP biosynthesis via de novo pathway; 5-formamido-1-(5-phospho-D-ribosyl)imidazole-4-carboxamide from 5-amino-1-(5-phospho-D-ribosyl)imidazole-4-carboxamide (10-formyl THF route): step 1/1. Its pathway is purine metabolism; IMP biosynthesis via de novo pathway; IMP from 5-formamido-1-(5-phospho-D-ribosyl)imidazole-4-carboxamide: step 1/1. The protein is Bifunctional purine biosynthesis protein PurH of Bacillus thuringiensis subsp. konkukian (strain 97-27).